An 80-amino-acid chain; its full sequence is Exodeoxyribonuclease 7 small subunit (80 aa).

The protein belongs to the XseB family. Heterooligomer composed of large and small subunits.

It localises to the cytoplasm. It catalyses the reaction Exonucleolytic cleavage in either 5'- to 3'- or 3'- to 5'-direction to yield nucleoside 5'-phosphates.. Functionally, bidirectionally degrades single-stranded DNA into large acid-insoluble oligonucleotides, which are then degraded further into small acid-soluble oligonucleotides. In Rickettsia felis (strain ATCC VR-1525 / URRWXCal2) (Rickettsia azadi), this protein is Exodeoxyribonuclease 7 small subunit.